Consider the following 351-residue polypeptide: Fe(3+) ions import ATP-binding protein FbpC (351 aa).

The ABC transporter domain occupies 7 to 237 (VVLKNVCKRF…PSSMFMANFM (231 aa)). Residue 39–46 (GPSGCGKT) coordinates ATP.

This sequence belongs to the ABC transporter superfamily. Fe(3+) ion importer (TC 3.A.1.10) family. The complex is composed of two ATP-binding proteins (FbpC), two transmembrane proteins (FbpB) and a solute-binding protein (FbpA).

It localises to the cell inner membrane. The enzyme catalyses Fe(3+)(out) + ATP + H2O = Fe(3+)(in) + ADP + phosphate + H(+). In terms of biological role, part of the ABC transporter complex FbpABC involved in Fe(3+) ions import. Responsible for energy coupling to the transport system. This Photobacterium profundum (strain SS9) protein is Fe(3+) ions import ATP-binding protein FbpC.